A 245-amino-acid polypeptide reads, in one-letter code: Dehydrogenase/reductase SDR family member 6 (245 aa).

Residues 16-18 (QGI), Asp-37, and Asp-58 contribute to the NAD(+) site. Arg-144 contributes to the substrate binding site. Catalysis depends on Tyr-147, which acts as the Proton acceptor. Residues Lys-151 and 180–184 (VDTPS) contribute to the NAD(+) site. Positions 188 and 205 each coordinate substrate.

The protein belongs to the short-chain dehydrogenases/reductases (SDR) family. In terms of assembly, homotetramer.

The protein localises to the cytoplasm. The enzyme catalyses cis-4-hydroxy-L-proline + NAD(+) = 4-oxo-L-proline + NADH + H(+). It carries out the reaction (R)-3-hydroxybutanoate + NAD(+) = acetoacetate + NADH + H(+). It functions in the pathway amino-acid metabolism. It participates in siderophore biosynthesis. Functionally, NAD(H)-dependent dehydrogenase/reductase with a preference for cyclic substrates. Catalyzes stereoselective conversion of 4-oxo-L-proline to cis-4-hydroxy-L-proline, likely a detoxification mechanism for ketoprolines. Mediates the formation of 2,5-dihydroxybenzoate (2,5-DHBA), a siderophore that chelates free cytoplasmic iron and associates with LCN2, thereby regulating iron transport and homeostasis while protecting cells against free radical-induced oxidative stress. The iron-siderophore complex is imported into mitochondria, providing an iron source for mitochondrial metabolic processes in particular heme synthesis. May act as a 3-hydroxybutyrate dehydrogenase. The chain is Dehydrogenase/reductase SDR family member 6 from Rattus norvegicus (Rat).